A 119-amino-acid polypeptide reads, in one-letter code: Myohemerythrin-1 (119 aa).

Residues histidine 25, histidine 55, asparagine 58, glutamate 59, histidine 74, histidine 78, histidine 107, and aspartate 112 each contribute to the Fe cation site.

This sequence belongs to the hemerythrin family. In terms of assembly, monomer. As to expression, muscle.

Myohemerythrin is an oxygen-binding protein found in the retractor muscles of certain worms. The oxygen-binding site contains two iron atoms. The chain is Myohemerythrin-1 from Phascolopsis gouldii (Peanut worm).